Here is a 269-residue protein sequence, read N- to C-terminus: Putative hydro-lyase Aave_3512 (269 aa).

This sequence belongs to the D-glutamate cyclase family.

This chain is Putative hydro-lyase Aave_3512, found in Paracidovorax citrulli (strain AAC00-1) (Acidovorax citrulli).